The sequence spans 706 residues: Envelope glycoprotein H (706 aa).

A signal peptide spans 1–18 (MQLLCVFCLVLLWEVGAA). Over 19 to 682 (SLSEVKLHLD…LYEERAHVVL (664 aa)) the chain is Virion surface. Asparagine 60 carries an N-linked (GlcNAc...) asparagine; by host glycan. Positions 165-229 (DKFQYTGAMT…QSGDYSLVIV (65 aa)) are interaction with gL. Cysteines 278 and 335 form a disulfide. N-linked (GlcNAc...) asparagine; by host glycosylation occurs at asparagine 435. Intrachain disulfides connect cysteine 454-cysteine 478 and cysteine 534-cysteine 587. 2 N-linked (GlcNAc...) asparagine; by host glycosylation sites follow: asparagine 549 and asparagine 604. Residues cysteine 612 and cysteine 615 are joined by a disulfide bond. Residue asparagine 664 is glycosylated (N-linked (GlcNAc...) asparagine; by host). Residues 683–703 (AIILYFIAFALGIFLVHKIVM) traverse the membrane as a helical segment. Topologically, residues 704–706 (FFL) are intravirion.

The protein belongs to the herpesviridae glycoprotein H family. In terms of assembly, interacts with glycoprotein L (gL); this interaction is necessary for the correct processing and cell surface expression of gH. The heterodimer gH/gL seems to interact with gB trimers during fusion. The heterodimer gH/gL interacts with host EPHA2 to facilitate virus internalization and fusion. Interacts with glycoprotein 42/BZLF2. In terms of processing, N-glycosylated, O-glycosylated, and sialylated.

The protein localises to the virion membrane. It localises to the host cell membrane. The protein resides in the host endosome membrane. In terms of biological role, the heterodimer glycoprotein H-glycoprotein L is required for the fusion of viral and plasma membranes leading to virus entry into the host cell. Following initial binding to host receptor, membrane fusion is mediated by the fusion machinery composed of gB and the heterodimer gH/gL. May also be involved in the fusion between the virion envelope and the outer nuclear membrane during virion morphogenesis. The heterodimer gH/gL targets also host EPHA2 to promote viral entry. The polypeptide is Envelope glycoprotein H (Homo sapiens (Human)).